A 372-amino-acid chain; its full sequence is Hydrogenase-2 small chain (372 aa).

Positions 1–37 (MTGDNTLIHSHGINRRDFMKLCAALAATMGLSSKAAA) form a signal peptide, tat-type signal. Positions 59, 62, 157, 191, 229, 232, 257, and 263 each coordinate [4Fe-4S] cluster. Positions 272, 292, and 295 each coordinate [3Fe-4S] cluster.

The protein belongs to the [NiFe]/[NiFeSe] hydrogenase small subunit family. Heterodimer of a large and a small subunit. [4Fe-4S] cluster is required as a cofactor. It depends on [3Fe-4S] cluster as a cofactor. In terms of processing, predicted to be exported by the Tat system. The position of the signal peptide cleavage has not been experimentally proven.

Its subcellular location is the cell membrane. It is found in the periplasm. It catalyses the reaction H2 + A = AH2. In terms of biological role, this is one of three E.coli hydrogenases synthesized in response to different physiological conditions. HYD2 is involved in hydrogen uptake. This Escherichia coli O157:H7 protein is Hydrogenase-2 small chain (hybO).